The following is a 364-amino-acid chain: Hepatitis A virus cellular receptor 1 (364 aa).

Positions 1 to 20 are cleaved as a signal peptide; that stretch reads MHPQVVILSLILHLADSVAG. Positions 21–121 constitute an Ig-like V-type domain; it reads SVKVGGEAGP…WFNDMKITVS (101 aa). At 21–295 the chain is on the extracellular side; it reads SVKVGGEAGP…SLLTANTTKG (275 aa). Disulfide bonds link Cys-36–Cys-105, Cys-46–Cys-57, and Cys-52–Cys-104. Residue Asn-65 is glycosylated (N-linked (GlcNAc...) asparagine). 12 consecutive repeat copies span residues 138 to 143, 144 to 149, 150 to 155, 156 to 160, 161 to 165, 166 to 171, 172 to 177, 178 to 183, 184 to 189, 190 to 195, 196 to 201, and 202 to 207. Residues 138–207 form a 12 X 6 AA approximate tandem repeats of V-P-T-T-T-T] region; the sequence is VPTVTTVRTS…TTTSVPVTTT (70 aa). Residues 216-257 are disordered; it reads PLPRQNHEPVATSPSSPQPAETHPTTLQGAIRREPTSSPLYS. Positions 227 to 243 are enriched in polar residues; that stretch reads TSPSSPQPAETHPTTLQ. Asn-263, Asn-277, and Asn-291 each carry an N-linked (GlcNAc...) asparagine glycan. Residues 296 to 316 traverse the membrane as a helical segment; the sequence is IYAGVCISVLVLLALLGVIIA. At 317–364 the chain is on the cytoplasmic side; it reads KKYFFKKEVQQLSVSFSSLQIKALQNAVEKEVQAEDNIYIENSLYATD. Residues Lys-338 and Lys-346 each participate in a glycyl lysine isopeptide (Lys-Gly) (interchain with G-Cter in ubiquitin) cross-link.

The protein belongs to the immunoglobulin superfamily. TIM family. In terms of assembly, interacts with STAM. Interacts with SELPLG. As to quaternary structure, (Microbial infection) Interacts with hepatitis A virus capsid proteins. (Microbial infection) Interacts with Ebolavirus envelope glycoprotein GP. In terms of assembly, (Microbial infection) Interacts with Zika virus envelope protein E. Post-translationally, ubiquitinated at two lysine residues Lys-338 and Lys-346 on its cytoplasmic domain. Ubiquitination promotes receptor endocytosis and target receptors for lysosomal degradation and termination of receptor signaling. In terms of processing, (Microbial infection) Ubiquitination is required for Dengue virus endocytosis. As to expression, widely expressed, with highest levels in kidney and testis. Expressed by activated CD4+ T-cells during the development of helper T-cells responses.

It is found in the cell membrane. Phosphatidylserine receptor that plays an important functional role in regulatory B-cells homeostasis including generation, expansion and suppressor functions. As P-selectin/SELPLG ligand, plays a specialized role in activated but not naive T-cell trafficking during inflammatory responses. Controls thereby T-cell accumulation in the inflamed central nervous system (CNS) and the induction of autoimmune disease. Also regulates expression of various anti-inflammatory cytokines and co-inhibitory ligands including IL10. Acts as a regulator of T-cell proliferation. May play a role in kidney injury and repair. In terms of biological role, (Microbial infection) Acts as a receptor for Hepatitis A virus. Functionally, (Microbial infection) Acts as a receptor for Ebolavirus and Marburg virus by binding exposed phosphatidyl-serine at the surface of virion membrane. Serves as a dual receptor for Ebolavirus by also interacting with envelope glycoprotein GP. Its function is as follows. (Microbial infection) Acts as a receptor for Dengue virus by binding exposed phosphatidyl-serine at the surface of virion membrane. TIM1 and Dengue virus are co-internalized during virus entry. (Microbial infection) Acts as a receptor for Zika virus by binding to envelope protein E. In terms of biological role, (Microbial infection) Plays a positive role in Chikungunya virus cell entry. The chain is Hepatitis A virus cellular receptor 1 (HAVCR1) from Homo sapiens (Human).